We begin with the raw amino-acid sequence, 185 residues long: Ribulose bisphosphate carboxylase small subunit, chloroplastic 2 (185 aa).

Residues 1–45 (MAAVIAKSSVSAAVARPARSSVRPMAALKPAVKAAPVAAPAQANQ) constitute a chloroplast transit peptide. Met-46 bears the N-methylmethionine mark.

This sequence belongs to the RuBisCO small chain family. Heterohexadecamer of 8 large and 8 small subunits.

The protein resides in the plastid. The protein localises to the chloroplast. It is found in the chloroplast stroma. In terms of biological role, ruBisCO catalyzes two reactions: the carboxylation of D-ribulose 1,5-bisphosphate, the primary event in carbon dioxide fixation, as well as the oxidative fragmentation of the pentose substrate. Both reactions occur simultaneously and in competition at the same active site. Although the small subunit is not catalytic it is essential for maximal activity. The polypeptide is Ribulose bisphosphate carboxylase small subunit, chloroplastic 2 (Chlamydomonas reinhardtii (Chlamydomonas smithii)).